We begin with the raw amino-acid sequence, 505 residues long: 2,3-bisphosphoglycerate-independent phosphoglycerate mutase (505 aa).

Positions 13 and 63 each coordinate Mn(2+). The active-site Phosphoserine intermediate is the Ser-63. Residues His-124, 153–154 (RD), Arg-183, Arg-189, 254–257 (RADR), and Lys-330 contribute to the substrate site. Positions 396, 400, 437, 438, and 456 each coordinate Mn(2+).

The protein belongs to the BPG-independent phosphoglycerate mutase family. Monomer. It depends on Mn(2+) as a cofactor.

The catalysed reaction is (2R)-2-phosphoglycerate = (2R)-3-phosphoglycerate. It functions in the pathway carbohydrate degradation; glycolysis; pyruvate from D-glyceraldehyde 3-phosphate: step 3/5. Functionally, catalyzes the interconversion of 2-phosphoglycerate and 3-phosphoglycerate. This chain is 2,3-bisphosphoglycerate-independent phosphoglycerate mutase, found in Ruegeria pomeroyi (strain ATCC 700808 / DSM 15171 / DSS-3) (Silicibacter pomeroyi).